The primary structure comprises 292 residues: MNIVLKLETKERQQLAEKYKSYEQVSKNPYITFFAKVGKTSISVYTSGKVVFQGNEAEKLASDFGHIAQVVPQKQTNLIGTDEVGNGSYFGGLMVTASFVSEENLNFLKEIGVADSKKLTDEKICQIAPKLIDRIPHVALVVEPAKYNEVIASGYNAVSIKVALHNQAIYLLEKQLGHKPENIVIDAFTTEANYKKYVNKEQNHPLTKVTLLTKAEDQFLAVAVSSIISRYLFLENLKKLSKESGFTLPSGAGNLSDKIAAQIIKSQGVDALNQLAKLHFANTQKAIKIAQL.

One can recognise an RNase H type-2 domain in the interval 76 to 292 (TNLIGTDEVG…TQKAIKIAQL (217 aa)). Aspartate 82, glutamate 83, and aspartate 186 together coordinate a divalent metal cation.

Belongs to the RNase HII family. RnhC subfamily. Mn(2+) is required as a cofactor. Mg(2+) serves as cofactor.

The protein resides in the cytoplasm. It catalyses the reaction Endonucleolytic cleavage to 5'-phosphomonoester.. Its function is as follows. Endonuclease that specifically degrades the RNA of RNA-DNA hybrids. This Lactococcus lactis subsp. lactis (strain IL1403) (Streptococcus lactis) protein is Ribonuclease HIII.